We begin with the raw amino-acid sequence, 314 residues long: Ribosome production factor 2 homolog (314 aa).

The 211-residue stretch at 28–238 (KKTLILHGTK…IRRNRLPNDS (211 aa)) folds into the Brix domain. The tract at residues 238-314 (SLMKEAMRTS…VAKKMKVSSE (77 aa)) is disordered. Composition is skewed to basic and acidic residues over residues 239–249 (LMKEAMRTSKD) and 275–314 (QKLK…VSSE).

It belongs to the RPF2 family.

The protein resides in the nucleus. It is found in the nucleolus. The protein is Ribosome production factor 2 homolog of Arabidopsis thaliana (Mouse-ear cress).